An 86-amino-acid polypeptide reads, in one-letter code: Small ribosomal subunit protein bS20 (86 aa).

The segment at Met1–Lys25 is disordered. The segment covering Lys12–Lys22 has biased composition (basic and acidic residues).

The protein belongs to the bacterial ribosomal protein bS20 family.

Its function is as follows. Binds directly to 16S ribosomal RNA. This is Small ribosomal subunit protein bS20 from Nocardioides sp. (strain ATCC BAA-499 / JS614).